The sequence spans 272 residues: Shikimate dehydrogenase (NADP(+)) (272 aa).

Shikimate contacts are provided by residues 14–16 (SKS) and T61. K65 serves as the catalytic Proton acceptor. E77 serves as a coordination point for NADP(+). The shikimate site is built by N86 and D102. NADP(+) is bound by residues 126–130 (GAGGA), 149–154 (NRTVSR), and M213. Residue Y215 coordinates shikimate. G237 contacts NADP(+).

It belongs to the shikimate dehydrogenase family. As to quaternary structure, homodimer.

It carries out the reaction shikimate + NADP(+) = 3-dehydroshikimate + NADPH + H(+). It functions in the pathway metabolic intermediate biosynthesis; chorismate biosynthesis; chorismate from D-erythrose 4-phosphate and phosphoenolpyruvate: step 4/7. In terms of biological role, involved in the biosynthesis of the chorismate, which leads to the biosynthesis of aromatic amino acids. Catalyzes the reversible NADPH linked reduction of 3-dehydroshikimate (DHSA) to yield shikimate (SA). In Shigella boydii serotype 4 (strain Sb227), this protein is Shikimate dehydrogenase (NADP(+)).